The chain runs to 426 residues: Meiotically up-regulated gene 170 protein (426 aa).

It belongs to the arrestin family.

The protein resides in the cytoplasm. It localises to the nucleus. Functionally, has a role in meiosis. This Schizosaccharomyces pombe (strain 972 / ATCC 24843) (Fission yeast) protein is Meiotically up-regulated gene 170 protein (mug170).